The primary structure comprises 193 residues: N-(5'-phosphoribosyl)anthranilate isomerase (193 aa).

The protein belongs to the TrpF family.

The enzyme catalyses N-(5-phospho-beta-D-ribosyl)anthranilate = 1-(2-carboxyphenylamino)-1-deoxy-D-ribulose 5-phosphate. It participates in amino-acid biosynthesis; L-tryptophan biosynthesis; L-tryptophan from chorismate: step 3/5. The polypeptide is N-(5'-phosphoribosyl)anthranilate isomerase (Streptococcus mutans serotype c (strain ATCC 700610 / UA159)).